A 1029-amino-acid chain; its full sequence is Collagen, type I, alpha 1b (1029 aa).

Residues 1–990 (QMSYVDHSKS…KAPDPFRGGH (990 aa)) form a disordered region. Residues 13–33 (PPQPGPMGPMGPRGPPGPPGS) show a composition bias toward pro residues. A compositionally biased stretch (low complexity) spans 34-57 (SGPQGFTGPPGEPGEPGASGAMGS). A compositionally biased stretch (basic and acidic residues) spans 67–81 (NGDDGEPGKPGRPGE). Low complexity-rich tracts occupy residues 82 to 91 (RGAAGPQGAR), 120 to 129 (VPGVMGARGR), and 136 to 147 (SGARGNDGNTGP). The span at 163 to 182 (PGGAGAKGETGPAGGRGNEG) shows a compositional bias: gly residues. 3 stretches are compositionally biased toward low complexity: residues 199–223 (AGPA…AGLA), 233–267 (AQGA…PGPA), and 299–309 (ERGAPGARGFP). A compositionally biased stretch (gly residues) spans 310 to 322 (GADGGAGGKGAPG). Composition is skewed to low complexity over residues 323-351 (ERGA…PGSK) and 429-465 (VGAP…QGAT). Over residues 466–477 (GETGKGLGGPTG) the composition is skewed to gly residues. Residues 478–497 (PRGAPGPAGNDGAKGEPGAA) show a composition bias toward low complexity. Gly residues-rich tracts occupy residues 498-507 (GAPGGLGAPG) and 531-540 (GGKGGDGAPG). Low complexity-rich tracts occupy residues 571-580 (VAGPTGPRGA) and 593-620 (AGFA…KGDA). 2 stretches are compositionally biased toward gly residues: residues 621–630 (GAPGPGGPVG) and 645–654 (GARGGAGPPG). 5 stretches are compositionally biased toward low complexity: residues 655–665 (ATGFPGPAGRV), 694–722 (ETGA…PGXD), 731–743 (PQGL…LPGQ), 830–839 (APGAVGPSGK), and 855–869 (SGPA…PAGA). The segment covering 870–884 (KGDRGEAGEAGDRGG) has biased composition (basic and acidic residues). Positions 906–934 (PAGASGPAGPRGPAGSNGAPGKDGMNGLP) are enriched in low complexity. A compositionally biased stretch (pro residues) spans 952–967 (AGPPGPPGPAGPPGPP). The region spanning 999-1029 (TQKLPLLDLAPMDVGAPDQEFGVEVGPVCFL) is the Fibrillar collagen NC1 domain.

This sequence belongs to the fibrillar collagen family.

The protein resides in the secreted. Its subcellular location is the extracellular space. It localises to the extracellular matrix. This Epinephelus aeneus (White grouper) protein is Collagen, type I, alpha 1b.